Consider the following 155-residue polypeptide: Cytochrome c-type biogenesis protein CcmE (155 aa).

Over 1–8 (MNPLRKKR) the chain is Cytoplasmic. A helical; Signal-anchor for type II membrane protein membrane pass occupies residues 9–29 (LLIIVALLAGVGLAVTLALSA). Over 30 to 155 (LQENINLFYT…AASPTPVKQG (126 aa)) the chain is Periplasmic. 2 residues coordinate heme: H124 and Y128.

Belongs to the CcmE/CycJ family.

The protein resides in the cell inner membrane. Its function is as follows. Heme chaperone required for the biogenesis of c-type cytochromes. Transiently binds heme delivered by CcmC and transfers the heme to apo-cytochromes in a process facilitated by CcmF and CcmH. The polypeptide is Cytochrome c-type biogenesis protein CcmE (Pseudomonas syringae pv. syringae (strain B728a)).